The sequence spans 118 residues: Large ribosomal subunit protein bL20 (118 aa).

This sequence belongs to the bacterial ribosomal protein bL20 family.

Functionally, binds directly to 23S ribosomal RNA and is necessary for the in vitro assembly process of the 50S ribosomal subunit. It is not involved in the protein synthesizing functions of that subunit. In Hahella chejuensis (strain KCTC 2396), this protein is Large ribosomal subunit protein bL20.